Here is a 253-residue protein sequence, read N- to C-terminus: uncharacterized protein (253 aa).

This sequence belongs to the A.longa ORF167/ORF288 family.

It localises to the plastid. This is an uncharacterized protein from Euglena longa (Euglenophycean alga).